A 455-amino-acid polypeptide reads, in one-letter code: Cysteine--tRNA ligase (455 aa).

A Zn(2+)-binding site is contributed by Cys28. The 'HIGH' region signature appears at 30-40 (MTVYDYCHLGH). Zn(2+) is bound by residues Cys209, His234, and Glu238. The 'KMSKS' region motif lies at 266–270 (KMSKS). Position 269 (Lys269) interacts with ATP.

This sequence belongs to the class-I aminoacyl-tRNA synthetase family. In terms of assembly, monomer. Zn(2+) serves as cofactor.

The protein localises to the cytoplasm. The enzyme catalyses tRNA(Cys) + L-cysteine + ATP = L-cysteinyl-tRNA(Cys) + AMP + diphosphate. In Methylobacillus flagellatus (strain ATCC 51484 / DSM 6875 / VKM B-1610 / KT), this protein is Cysteine--tRNA ligase.